The chain runs to 323 residues: Prenyl transferase (323 aa).

3 residues coordinate isopentenyl diphosphate: Lys-46, Arg-49, and His-81. Residues Asp-88 and Asp-92 each coordinate Mg(2+). An all-trans-polyprenyl diphosphate is bound at residue Arg-97. Arg-98 provides a ligand contact to isopentenyl diphosphate. An all-trans-polyprenyl diphosphate contacts are provided by Lys-174, Thr-175, and Gln-212.

It belongs to the FPP/GGPP synthase family. Requires Mg(2+) as cofactor.

Possible role in synthesis of the nonaprenyl side chain of plastoquinone or in synthesis of other prenyl chains such as undekaprenyl pyrophosphate. The polypeptide is Prenyl transferase (preA) (Synechocystis sp. (strain ATCC 27184 / PCC 6803 / Kazusa)).